Consider the following 102-residue polypeptide: Small ribosomal subunit protein uS10 (102 aa).

This sequence belongs to the universal ribosomal protein uS10 family. Part of the 30S ribosomal subunit.

Involved in the binding of tRNA to the ribosomes. The sequence is that of Small ribosomal subunit protein uS10 from Thermococcus gammatolerans (strain DSM 15229 / JCM 11827 / EJ3).